We begin with the raw amino-acid sequence, 151 residues long: Deoxyuridine 5'-triphosphate nucleotidohydrolase (151 aa).

Substrate contacts are provided by residues 71–73, Asn-84, and 88–90; these read RSG and TID.

The protein belongs to the dUTPase family. Mg(2+) is required as a cofactor.

It catalyses the reaction dUTP + H2O = dUMP + diphosphate + H(+). Its pathway is pyrimidine metabolism; dUMP biosynthesis; dUMP from dCTP (dUTP route): step 2/2. In terms of biological role, this enzyme is involved in nucleotide metabolism: it produces dUMP, the immediate precursor of thymidine nucleotides and it decreases the intracellular concentration of dUTP so that uracil cannot be incorporated into DNA. The sequence is that of Deoxyuridine 5'-triphosphate nucleotidohydrolase from Gluconobacter oxydans (strain 621H) (Gluconobacter suboxydans).